Here is a 578-residue protein sequence, read N- to C-terminus: Phosphatase DCR2 (578 aa).

Position 116–123 (116–123) interacts with ATP; the sequence is GRRWFGKS.

The protein resides in the cytoplasm. Functionally, required for cell cycle progression. Has a role in the completion of START. The sequence is that of Phosphatase DCR2 (DCR2) from Saccharomyces cerevisiae (strain ATCC 204508 / S288c) (Baker's yeast).